Reading from the N-terminus, the 1087-residue chain is Exportin-7 (1087 aa).

The Importin N-terminal domain occupies 30-96; the sequence is AEKALVEFTN…RNYVLNYLAT (67 aa).

The protein belongs to the exportin family.

Its subcellular location is the cytoplasm. It is found in the nucleus. Functionally, mediates the nuclear export of proteins (cargos) with broad substrate specificity. This chain is Exportin-7 (XPO7), found in Gallus gallus (Chicken).